The following is a 483-amino-acid chain: Glycogen synthase kinase-3 alpha (483 aa).

A compositionally biased stretch (gly residues) spans 1–15 (MSGGGPSGGGPGGSG). Residues 1 to 96 (MSGGGPSGGG…PPPGVKLGRD (96 aa)) form a disordered region. S2 carries the N-acetylserine modification. S2 is subject to Phosphoserine. S21 is subject to Phosphoserine; by PKB/AKT1. The segment covering 25–82 (PGGGGGGGGGGPGGSASGPGGTGGGKASVGAMGGGVGASSSGGGPSGSGGGGSGGPGA) has biased composition (gly residues). 3 positions are modified to phosphoserine: S72, S77, and S97. Residues 119 to 403 (YTDIKVIGNG…PLEACAHSFF (285 aa)) enclose the Protein kinase domain. ATP contacts are provided by residues 125 to 133 (IGNGSFGVV) and K148. Residue D244 is the Proton acceptor of the active site. Y279 bears the Phosphotyrosine mark. The tract at residues 443–483 (PHLRSPSGPATLTSSSQALTETQTGQDWQAPDATPTLTNSS) is disordered. Over residues 450–469 (GPATLTSSSQALTETQTGQD) the composition is skewed to polar residues.

Belongs to the protein kinase superfamily. CMGC Ser/Thr protein kinase family. GSK-3 subfamily. Monomer. Interacts with ARRB2, AXIN1 and CTNNB1/beta-catenin. Interacts with CTNND2. Interacts with LMBR1L. Interacts with DDX3X. Interacts with TNFRSF10B. Phosphorylated by AKT1 at Ser-21: upon insulin-mediated signaling, the activated PKB/AKT1 protein kinase phosphorylates and deactivates GSK3A, resulting in the dephosphorylation and activation of GYS1. Activated by phosphorylation at Tyr-279.

It catalyses the reaction L-seryl-[tau protein] + ATP = O-phospho-L-seryl-[tau protein] + ADP + H(+). It carries out the reaction L-threonyl-[tau protein] + ATP = O-phospho-L-threonyl-[tau protein] + ADP + H(+). The enzyme catalyses L-seryl-[protein] + ATP = O-phospho-L-seryl-[protein] + ADP + H(+). The catalysed reaction is L-threonyl-[protein] + ATP = O-phospho-L-threonyl-[protein] + ADP + H(+). Activated by phosphorylation at Tyr-279. In response to insulin, inhibited by phosphorylation at Ser-21 by PKB/AKT1; phosphorylation at this site causes a conformational change, preventing access of substrates to the active site. Inhibited by lithium. In terms of biological role, constitutively active protein kinase that acts as a negative regulator in the hormonal control of glucose homeostasis, Wnt signaling and regulation of transcription factors and microtubules, by phosphorylating and inactivating glycogen synthase (GYS1 or GYS2), CTNNB1/beta-catenin, APC and AXIN1. Requires primed phosphorylation of the majority of its substrates. Contributes to insulin regulation of glycogen synthesis by phosphorylating and inhibiting GYS1 activity and hence glycogen synthesis. Regulates glycogen metabolism in liver, but not in muscle. May also mediate the development of insulin resistance by regulating activation of transcription factors. In Wnt signaling, regulates the level and transcriptional activity of nuclear CTNNB1/beta-catenin. Facilitates amyloid precursor protein (APP) processing and the generation of APP-derived amyloid plaques found in Alzheimer disease. May be involved in the regulation of replication in pancreatic beta-cells. Is necessary for the establishment of neuronal polarity and axon outgrowth. Through phosphorylation of the anti-apoptotic protein MCL1, may control cell apoptosis in response to growth factors deprivation. Acts as a regulator of autophagy by mediating phosphorylation of KAT5/TIP60 under starvation conditions, activating KAT5/TIP60 acetyltransferase activity and promoting acetylation of key autophagy regulators, such as ULK1 and RUBCNL/Pacer. Negatively regulates extrinsic apoptotic signaling pathway via death domain receptors. Promotes the formation of an anti-apoptotic complex, made of DDX3X, BRIC2 and GSK3B, at death receptors, including TNFRSF10B. The anti-apoptotic function is most effective with weak apoptotic signals and can be overcome by stronger stimulation. This Rattus norvegicus (Rat) protein is Glycogen synthase kinase-3 alpha (Gsk3a).